The sequence spans 1323 residues: Inositol hexakisphosphate and diphosphoinositol-pentakisphosphate kinase (1323 aa).

Residue 26-27 (RK) participates in substrate binding. ATP is bound by residues R109, K162, H169, R188, 212–215 (EEFI), and 221–223 (DVK). 188–189 (RK) lines the substrate pocket. Positions 223 and 237 each coordinate substrate. ATP is bound by residues D284 and 296 to 298 (DVN). Substrate is bound at residue 301 to 304 (SFVK). The polyphosphoinositide-binding domain stretch occupies residues 355–426 (TTPSGKLAEL…VLELARALVI (72 aa)). Polar residues-rich tracts occupy residues 933–947 (FNLS…SSRS) and 977–992 (VTPT…NDDL). 3 disordered regions span residues 933 to 1022 (FNLS…SEDD), 1043 to 1107 (AMAD…GGGK), and 1134 to 1155 (IVIP…ASER). The span at 993–1006 (SISSNAESTAAEST) shows a compositional bias: low complexity. The segment covering 1062 to 1074 (KSMEEGDKPHGEW) has biased composition (basic and acidic residues). The segment covering 1090-1101 (SNEMESNNESME) has biased composition (low complexity).

The protein belongs to the histidine acid phosphatase family. VIP1 subfamily.

Its subcellular location is the cytoplasm. The protein localises to the cytosol. It carries out the reaction 1D-myo-inositol hexakisphosphate + ATP = 1-diphospho-1D-myo-inositol 2,3,4,5,6-pentakisphosphate + ADP. It catalyses the reaction 5-diphospho-1D-myo-inositol 1,2,3,4,6-pentakisphosphate + ATP + H(+) = 1,5-bis(diphospho)-1D-myo-inositol 2,3,4,6-tetrakisphosphate + ADP. Functionally, bifunctional inositol kinase that acts in concert with the IP6K kinases to synthesize the diphosphate group-containing inositol pyrophosphates diphosphoinositol pentakisphosphate, PP-InsP5, and bis-diphosphoinositol tetrakisphosphate, (PP)2-InsP4. PP-InsP5 and (PP)2-InsP4, also respectively called InsP7 and InsP8, may regulate a variety of cellular processes, including apoptosis, vesicle trafficking, cytoskeletal dynamics, and exocytosis. Phosphorylates inositol hexakisphosphate (InsP6) at position 1 to produce PP-InsP5 which is in turn phosphorylated by IP6Ks to produce (PP)2-InsP4. Alternatively, phosphorylates PP-InsP5 at position 1, produced by IP6Ks from InsP6, to produce (PP)2-InsP4. The chain is Inositol hexakisphosphate and diphosphoinositol-pentakisphosphate kinase from Caenorhabditis elegans.